Here is a 188-residue protein sequence, read N- to C-terminus: uncharacterized protein (188 aa).

A signal peptide spans 1–18 (MTLRIIAHLLALTASLAG). C19 carries N-palmitoyl cysteine lipidation. A lipid anchor (S-diacylglycerol cysteine) is attached at C19.

The protein localises to the cell membrane. This is an uncharacterized protein from Sinorhizobium fredii (strain NBRC 101917 / NGR234).